Consider the following 281-residue polypeptide: 2,3,4,5-tetrahydropyridine-2,6-dicarboxylate N-succinyltransferase (281 aa).

Substrate contacts are provided by Arg108 and Asp145.

The protein belongs to the transferase hexapeptide repeat family. In terms of assembly, homotrimer.

It localises to the cytoplasm. The catalysed reaction is (S)-2,3,4,5-tetrahydrodipicolinate + succinyl-CoA + H2O = (S)-2-succinylamino-6-oxoheptanedioate + CoA. Its pathway is amino-acid biosynthesis; L-lysine biosynthesis via DAP pathway; LL-2,6-diaminopimelate from (S)-tetrahydrodipicolinate (succinylase route): step 1/3. The polypeptide is 2,3,4,5-tetrahydropyridine-2,6-dicarboxylate N-succinyltransferase (Rhodopseudomonas palustris (strain BisA53)).